A 363-amino-acid chain; its full sequence is uncharacterized protein (363 aa).

The next 7 helical transmembrane spans lie at 20 to 40, 63 to 83, 101 to 121, 141 to 161, 186 to 206, 227 to 247, and 268 to 288; these read WFFT…NTNI, INFA…FLVM, FPLI…GVQS, SVWQ…FTAF, FSLL…IMLA, IFKY…CVVL, and FLIV…WYVL. A disordered region spans residues 329 to 363; the sequence is PRADLTPNDTLHMESKKKPLSQSPRVVIEEEDVAE.

Its subcellular location is the membrane. This is an uncharacterized protein from Caenorhabditis elegans.